The sequence spans 964 residues: Translation initiation factor IF-2 (964 aa).

A compositionally biased stretch (basic and acidic residues) spans 1–10 (MSDKTNDDKT). Positions 1–379 (MSDKTNDDKT…SQMQETREKI (379 aa)) are disordered. Residues 27 to 37 (EQSTVRQNFSH) are compositionally biased toward polar residues. The segment covering 77–102 (APAASTPAPAQAAQPAQAAPVVRAPA) has biased composition (low complexity). Over residues 103-113 (PATPAPKPAAP) the composition is skewed to pro residues. Over residues 114–140 (AAPVTKPHVAQQRPAQQRPGGQQAQRP) the composition is skewed to low complexity. 2 stretches are compositionally biased toward basic and acidic residues: residues 156-227 (SEMD…EAAK) and 234-243 (ARTERRDDAR). The span at 250 to 278 (RPQQAGRPQGNRPPQGGRPQQGGPRPAAP) shows a compositional bias: low complexity. Positions 323-338 (PEVRAPKVVKTEDDRR) are enriched in basic and acidic residues. One can recognise a tr-type G domain in the interval 462–629 (SRPPVVTIMG…AILLQAEILD (168 aa)). A G1 region spans residues 471–478 (GHVDHGKT). 471-478 (GHVDHGKT) is a binding site for GTP. Residues 496–500 (GITQH) are G2. The tract at residues 517–520 (DTPG) is G3. GTP contacts are provided by residues 517–521 (DTPGH) and 571–574 (NKID). The interval 571–574 (NKID) is G4. The G5 stretch occupies residues 607–609 (SAK).

The protein belongs to the TRAFAC class translation factor GTPase superfamily. Classic translation factor GTPase family. IF-2 subfamily.

The protein localises to the cytoplasm. Functionally, one of the essential components for the initiation of protein synthesis. Protects formylmethionyl-tRNA from spontaneous hydrolysis and promotes its binding to the 30S ribosomal subunits. Also involved in the hydrolysis of GTP during the formation of the 70S ribosomal complex. The polypeptide is Translation initiation factor IF-2 (Brucella anthropi (strain ATCC 49188 / DSM 6882 / CCUG 24695 / JCM 21032 / LMG 3331 / NBRC 15819 / NCTC 12168 / Alc 37) (Ochrobactrum anthropi)).